Consider the following 396-residue polypeptide: Elongation factor Tu (396 aa).

Residues 10–206 (KPHVNIGTIG…AVDESVPEPV (197 aa)) enclose the tr-type G domain. Residues 19-26 (GHVDHGKT) form a G1 region. 19–26 (GHVDHGKT) serves as a coordination point for GTP. Thr-26 is a Mg(2+) binding site. Residues 62-66 (GITIN) form a G2 region. Positions 83–86 (DAPG) are G3. Residues 83–87 (DAPGH) and 138–141 (NKSD) contribute to the GTP site. Positions 138–141 (NKSD) are G4. Positions 176 to 178 (SGL) are G5.

Belongs to the TRAFAC class translation factor GTPase superfamily. Classic translation factor GTPase family. EF-Tu/EF-1A subfamily. As to quaternary structure, monomer.

The protein resides in the cytoplasm. The enzyme catalyses GTP + H2O = GDP + phosphate + H(+). Functionally, GTP hydrolase that promotes the GTP-dependent binding of aminoacyl-tRNA to the A-site of ribosomes during protein biosynthesis. The chain is Elongation factor Tu from Beutenbergia cavernae (strain ATCC BAA-8 / DSM 12333 / CCUG 43141 / JCM 11478 / NBRC 16432 / NCIMB 13614 / HKI 0122).